A 229-amino-acid chain; its full sequence is Triosephosphate isomerase (229 aa).

Substrate is bound at residue 6 to 8 (NFK). The Electrophile role is filled by His-88. Catalysis depends on Glu-157, which acts as the Proton acceptor. 2 residues coordinate substrate: Gly-163 and Ser-193.

Belongs to the triosephosphate isomerase family. Homodimer.

It is found in the cytoplasm. The enzyme catalyses D-glyceraldehyde 3-phosphate = dihydroxyacetone phosphate. Its pathway is carbohydrate biosynthesis; gluconeogenesis. The protein operates within carbohydrate degradation; glycolysis; D-glyceraldehyde 3-phosphate from glycerone phosphate: step 1/1. In terms of biological role, involved in the gluconeogenesis. Catalyzes stereospecifically the conversion of dihydroxyacetone phosphate (DHAP) to D-glyceraldehyde-3-phosphate (G3P). The protein is Triosephosphate isomerase of Sulfurovum sp. (strain NBC37-1).